The chain runs to 308 residues: Ribosomal RNA large subunit methyltransferase F (308 aa).

It belongs to the methyltransferase superfamily. METTL16/RlmF family.

The protein resides in the cytoplasm. The enzyme catalyses adenosine(1618) in 23S rRNA + S-adenosyl-L-methionine = N(6)-methyladenosine(1618) in 23S rRNA + S-adenosyl-L-homocysteine + H(+). Functionally, specifically methylates the adenine in position 1618 of 23S rRNA. The sequence is that of Ribosomal RNA large subunit methyltransferase F from Escherichia coli O17:K52:H18 (strain UMN026 / ExPEC).